We begin with the raw amino-acid sequence, 418 residues long: Cyclin-A1 (418 aa).

It belongs to the cyclin family. Cyclin AB subfamily. In terms of assembly, interacts with the CDK1 and the CDK2 protein kinases to form a serine/threonine kinase holoenzyme complex. The cyclin subunit imparts substrate specificity to the complex.

It localises to the nucleus. May be involved in the control of the cell cycle at the G1/S (start) and G2/M (mitosis) transitions. The sequence is that of Cyclin-A1 (ccna1) from Xenopus laevis (African clawed frog).